A 135-amino-acid chain; its full sequence is Small ribosomal subunit protein uS12 (135 aa).

Residues 1–20 (MPTINQLVRKGRHSKVTKSK) are disordered. Residues 9-18 (RKGRHSKVTK) show a composition bias toward basic residues. Asp102 carries the 3-methylthioaspartic acid modification.

The protein belongs to the universal ribosomal protein uS12 family. As to quaternary structure, part of the 30S ribosomal subunit. Contacts proteins S8 and S17. May interact with IF1 in the 30S initiation complex.

With S4 and S5 plays an important role in translational accuracy. Functionally, interacts with and stabilizes bases of the 16S rRNA that are involved in tRNA selection in the A site and with the mRNA backbone. Located at the interface of the 30S and 50S subunits, it traverses the body of the 30S subunit contacting proteins on the other side and probably holding the rRNA structure together. The combined cluster of proteins S8, S12 and S17 appears to hold together the shoulder and platform of the 30S subunit. This chain is Small ribosomal subunit protein uS12, found in Lactobacillus helveticus (strain DPC 4571).